A 227-amino-acid chain; its full sequence is Protein Saci_0792 (227 aa).

The AMMECR1 domain maps to 15–209; that stretch reads DIGKQLIKIA…EINKNTDEII (195 aa).

The sequence is that of Protein Saci_0792 from Sulfolobus acidocaldarius (strain ATCC 33909 / DSM 639 / JCM 8929 / NBRC 15157 / NCIMB 11770).